The chain runs to 191 residues: UPF0312 protein Shewmr7_1249 (191 aa).

Positions 1–22 (MKKQLLAALIGGFLLAPMAASA) are cleaved as a signal peptide.

This sequence belongs to the UPF0312 family. Type 1 subfamily.

It is found in the periplasm. The sequence is that of UPF0312 protein Shewmr7_1249 from Shewanella sp. (strain MR-7).